The following is a 921-amino-acid chain: Isoleucine--tRNA ligase (921 aa).

The 'HIGH' region motif lies at 59-69; the sequence is PYANGHLHIGH. Glu-569 lines the L-isoleucyl-5'-AMP pocket. The 'KMSKS' region motif lies at 610-614; it reads KMSKS. Lys-613 is a binding site for ATP. Zn(2+)-binding residues include Cys-894, Cys-897, Cys-909, and Cys-912.

It belongs to the class-I aminoacyl-tRNA synthetase family. IleS type 1 subfamily. In terms of assembly, monomer. Zn(2+) is required as a cofactor.

It localises to the cytoplasm. The catalysed reaction is tRNA(Ile) + L-isoleucine + ATP = L-isoleucyl-tRNA(Ile) + AMP + diphosphate. Functionally, catalyzes the attachment of isoleucine to tRNA(Ile). As IleRS can inadvertently accommodate and process structurally similar amino acids such as valine, to avoid such errors it has two additional distinct tRNA(Ile)-dependent editing activities. One activity is designated as 'pretransfer' editing and involves the hydrolysis of activated Val-AMP. The other activity is designated 'posttransfer' editing and involves deacylation of mischarged Val-tRNA(Ile). The chain is Isoleucine--tRNA ligase from Campylobacter lari (strain RM2100 / D67 / ATCC BAA-1060).